The primary structure comprises 211 residues: Protein-methionine-sulfoxide reductase heme-binding subunit MsrQ (211 aa).

Helical transmembrane passes span Trp10 to Ile30, Leu82 to Val102, Pro116 to Thr136, and Phe153 to Ser173.

It belongs to the MsrQ family. In terms of assembly, heterodimer of a catalytic subunit (MsrP) and a heme-binding subunit (MsrQ). It depends on FMN as a cofactor. The cofactor is heme b.

It is found in the cell inner membrane. Functionally, part of the MsrPQ system that repairs oxidized periplasmic proteins containing methionine sulfoxide residues (Met-O), using respiratory chain electrons. Thus protects these proteins from oxidative-stress damage caused by reactive species of oxygen and chlorine generated by the host defense mechanisms. MsrPQ is essential for the maintenance of envelope integrity under bleach stress, rescuing a wide series of structurally unrelated periplasmic proteins from methionine oxidation, including the primary periplasmic chaperone SurA and the lipoprotein Pal. MsrQ provides electrons for reduction to the reductase catalytic subunit MsrP, using the quinone pool of the respiratory chain. The sequence is that of Protein-methionine-sulfoxide reductase heme-binding subunit MsrQ from Escherichia coli O157:H7.